The chain runs to 397 residues: DNA excision repair protein ERCC-8 (397 aa).

WD repeat units lie at residues 41 to 81 (IHGS…RQPH), 97 to 137 (VHKY…AADV), 184 to 224 (GHRQ…GCLL), 243 to 282 (AHNG…NTLV), and 332 to 371 (GHYK…PVPD). Phosphoserine occurs at positions 391, 392, and 393.

Part of the CSA complex (also named DCX(ERCC8) complex), a DCX E3 ubiquitin-protein ligase complex containing ERCC8, RBX1, DDB1 and CUL4A; the CSA complex interacts with RNA polymerase II; upon UV irradiation it interacts with the COP9 signalosome and preferentially with the hyperphosphorylated form of RNA polymerase II. Interacts with ERCC6/CSB (via CIM motif); promoting recruitment to lesion-stalled RNA polymerase II (Pol II). Interacts with KIAA1530/UVSSA. Interacts with a subunit of RNA polymerase II TFIIH.

Its subcellular location is the nucleus. It is found in the chromosome. It localises to the nucleus matrix. Its pathway is protein modification; protein ubiquitination. Functionally, substrate-recognition component of the CSA complex, a DCX (DDB1-CUL4-X-box) E3 ubiquitin-protein ligase complex, involved in transcription-coupled nucleotide excision repair (TC-NER), a process during which RNA polymerase II-blocking lesions are rapidly removed from the transcribed strand of active genes. Following recruitment to lesion-stalled RNA polymerase II (Pol II), the CSA complex mediates ubiquitination of Pol II subunit POLR2A/RPB1 at 'Lys-1268', a critical TC-NER checkpoint, governing RNA Pol II stability and initiating DNA damage excision by TFIIH recruitment. The CSA complex also promotes the ubiquitination and subsequent proteasomal degradation of ERCC6/CSB in a UV-dependent manner; ERCC6 degradation is essential for the recovery of RNA synthesis after transcription-coupled repair. Also plays a role in DNA double-strand breaks (DSSBs) repair by non-homologous end joining (NHEJ). The protein is DNA excision repair protein ERCC-8 of Mus musculus (Mouse).